Reading from the N-terminus, the 203-residue chain is Guanylate kinase (203 aa).

In terms of domain architecture, Guanylate kinase-like spans 3 to 181; that stretch reads GSLFIVAAPS…AHTDLRAIVQ (179 aa). 10–17 provides a ligand contact to ATP; it reads APSGAGKT.

This sequence belongs to the guanylate kinase family.

The protein resides in the cytoplasm. It carries out the reaction GMP + ATP = GDP + ADP. Essential for recycling GMP and indirectly, cGMP. This Nitrosococcus oceani (strain ATCC 19707 / BCRC 17464 / JCM 30415 / NCIMB 11848 / C-107) protein is Guanylate kinase.